The primary structure comprises 146 residues: Holo-[acyl-carrier-protein] synthase (146 aa).

The Mg(2+) site is built by aspartate 9 and glutamate 63.

It belongs to the P-Pant transferase superfamily. AcpS family. It depends on Mg(2+) as a cofactor.

Its subcellular location is the cytoplasm. The catalysed reaction is apo-[ACP] + CoA = holo-[ACP] + adenosine 3',5'-bisphosphate + H(+). Transfers the 4'-phosphopantetheine moiety from coenzyme A to a Ser of acyl-carrier-protein. The sequence is that of Holo-[acyl-carrier-protein] synthase from Burkholderia orbicola (strain MC0-3).